Consider the following 116-residue polypeptide: Prefoldin subunit beta (116 aa).

It belongs to the prefoldin subunit beta family. Heterohexamer of two alpha and four beta subunits.

The protein resides in the cytoplasm. Molecular chaperone capable of stabilizing a range of proteins. Seems to fulfill an ATP-independent, HSP70-like function in archaeal de novo protein folding. In Methanobrevibacter smithii (strain ATCC 35061 / DSM 861 / OCM 144 / PS), this protein is Prefoldin subunit beta.